The primary structure comprises 211 residues: MAKVKICGLKDPDMVAFAAREGADWVGFVFAPSVRQVTLAAAETLLLSVGKATPVALMVDPSDAEAQAVAALGFPILQLHGQETPARAAELKSLTGCAIWKAIGVQTRDNLGQIGTFPDIDGLLLDAKPPEGATIAGGHGAAFDWSILKGWTAPKPWLLAGGLTPENVAEAIAATGAPGVDVSSGVERIRGLKDRELVRAFIRAAKASEQP.

Belongs to the TrpF family.

The catalysed reaction is N-(5-phospho-beta-D-ribosyl)anthranilate = 1-(2-carboxyphenylamino)-1-deoxy-D-ribulose 5-phosphate. The protein operates within amino-acid biosynthesis; L-tryptophan biosynthesis; L-tryptophan from chorismate: step 3/5. This is N-(5'-phosphoribosyl)anthranilate isomerase from Hyphomonas neptunium (strain ATCC 15444).